We begin with the raw amino-acid sequence, 239 residues long: NPHYVDKDRDLDIACRRIAWGKFMNSGQTCVAPDYILCDPSIQSQVVEKLKKSLKEFYGEDAKKSRDYGRIINSRHFQRVMGLLEGQKVAYGGTGDATTRYIAPTILTDVDPESPVMQEEVFGPVLPIMCVRSLEEAIQFITQREKPLALYVFSPNDKVIKKMIAETSSGGVTANDVVVHISVHSLPYGGVGDSGMGSYHGRKSFETFSHRRSCLVRPLLNEETLKARYPRARPICPDT.

Residue cysteine 30 is part of the active site.

The protein belongs to the aldehyde dehydrogenase family. As to quaternary structure, homodimer.

The protein resides in the cytoplasm. The catalysed reaction is an aldehyde + NAD(+) + H2O = a carboxylate + NADH + 2 H(+). It catalyses the reaction octanal + NAD(+) + H2O = octanoate + NADH + 2 H(+). ALDHs play a major role in the detoxification of alcohol-derived acetaldehyde. They are involved in the metabolism of corticosteroids, biogenic amines, neurotransmitters, and lipid peroxidation. Oxidizes medium and long chain aldehydes into non-toxic fatty acids. Preferentially oxidizes aromatic aldehyde substrates. Comprises about 50 percent of corneal epithelial soluble proteins. May play a role in preventing corneal damage caused by ultraviolet light. This Bos taurus (Bovine) protein is Aldehyde dehydrogenase, dimeric NADP-preferring (ALDH3A1).